The following is a 367-amino-acid chain: Aspartate-semialdehyde dehydrogenase (367 aa).

NADP(+)-binding positions include 10-13, 37-38, and Gln-73; these read RGMV and TS. Phosphate is bound at residue Arg-102. The Acyl-thioester intermediate role is filled by Cys-135. Cys-135 carries the S-cysteinyl cysteine; in inhibited form modification. Gln-162 serves as a coordination point for substrate. NADP(+) contacts are provided by residues 165 to 169, Arg-173, and Pro-193; that span reads SGGGA. Glu-241 is a substrate binding site. Lys-244 contacts phosphate. Residue Arg-267 participates in substrate binding. The Proton acceptor role is filled by His-274. An NADP(+)-binding site is contributed by Gln-350.

The protein belongs to the aspartate-semialdehyde dehydrogenase family. As to quaternary structure, homodimer.

The catalysed reaction is L-aspartate 4-semialdehyde + phosphate + NADP(+) = 4-phospho-L-aspartate + NADPH + H(+). It functions in the pathway amino-acid biosynthesis; L-lysine biosynthesis via DAP pathway; (S)-tetrahydrodipicolinate from L-aspartate: step 2/4. Its pathway is amino-acid biosynthesis; L-methionine biosynthesis via de novo pathway; L-homoserine from L-aspartate: step 2/3. It participates in amino-acid biosynthesis; L-threonine biosynthesis; L-threonine from L-aspartate: step 2/5. Is inhibited by L- and D-cystine, and by other cystine derivatives, via the formation of a covalently bound cysteine at the active site Cys-135. In terms of biological role, catalyzes the NADPH-dependent formation of L-aspartate-semialdehyde (L-ASA) by the reductive dephosphorylation of L-aspartyl-4-phosphate. In Escherichia coli (strain K12), this protein is Aspartate-semialdehyde dehydrogenase.